Reading from the N-terminus, the 207-residue chain is tRNA (pseudouridine(54)-N(1))-methyltransferase (207 aa).

Leu-137 provides a ligand contact to S-adenosyl-L-methionine.

It belongs to the methyltransferase superfamily. TrmY family. Homodimer.

It localises to the cytoplasm. It carries out the reaction pseudouridine(54) in tRNA + S-adenosyl-L-methionine = N(1)-methylpseudouridine(54) in tRNA + S-adenosyl-L-homocysteine + H(+). Functionally, specifically catalyzes the N1-methylation of pseudouridine at position 54 (Psi54) in tRNAs. This chain is tRNA (pseudouridine(54)-N(1))-methyltransferase, found in Halorubrum lacusprofundi (strain ATCC 49239 / DSM 5036 / JCM 8891 / ACAM 34).